The sequence spans 141 residues: Large ribosomal subunit protein uL11 (141 aa).

The protein belongs to the universal ribosomal protein uL11 family. As to quaternary structure, part of the ribosomal stalk of the 50S ribosomal subunit. Interacts with L10 and the large rRNA to form the base of the stalk. L10 forms an elongated spine to which L12 dimers bind in a sequential fashion forming a multimeric L10(L12)X complex. Post-translationally, one or more lysine residues are methylated.

Functionally, forms part of the ribosomal stalk which helps the ribosome interact with GTP-bound translation factors. The protein is Large ribosomal subunit protein uL11 of Pseudothermotoga lettingae (strain ATCC BAA-301 / DSM 14385 / NBRC 107922 / TMO) (Thermotoga lettingae).